The chain runs to 120 residues: Myohemerythrin (120 aa).

Fe cation contacts are provided by His26, His56, Glu60, His75, His79, His108, and Asp113.

It belongs to the hemerythrin family.

In terms of biological role, myohemerythrin is an oxygen-binding protein found in the retractor muscles of certain worms. The oxygen-binding site contains two iron atoms. This is Myohemerythrin from Riftia pachyptila (Vent tube worm).